The chain runs to 168 residues: Phosphopantetheine adenylyltransferase (168 aa).

Threonine 14 serves as a coordination point for substrate. Residues 14 to 15 (TF) and histidine 22 each bind ATP. Substrate is bound by residues lysine 46, leucine 78, and arginine 92. Residues 93–95 (GLR), glutamate 103, and 128–134 (YSFISSS) each bind ATP.

This sequence belongs to the bacterial CoaD family. As to quaternary structure, homohexamer. Mg(2+) is required as a cofactor.

The protein localises to the cytoplasm. The catalysed reaction is (R)-4'-phosphopantetheine + ATP + H(+) = 3'-dephospho-CoA + diphosphate. The protein operates within cofactor biosynthesis; coenzyme A biosynthesis; CoA from (R)-pantothenate: step 4/5. Functionally, reversibly transfers an adenylyl group from ATP to 4'-phosphopantetheine, yielding dephospho-CoA (dPCoA) and pyrophosphate. The chain is Phosphopantetheine adenylyltransferase from Xanthomonas campestris pv. campestris (strain 8004).